We begin with the raw amino-acid sequence, 435 residues long: Membrane-bound ghrelin O-acyltransferase MBOAT4 (435 aa).

Over 1-5 (MDWLQ) the chain is Lumenal. A helical membrane pass occupies residues 6 to 26 (FFFLHPVSLYQGAAFPFALLF). At 27–40 (NYLCITESFPTRAR) the chain is on the cytoplasmic side. The chain crosses the membrane as a helical span at residues 41-56 (YLFLLAGGGVLALAAM). The Lumenal segment spans residues 57-59 (GPY). Residues 60 to 76 (ALLIFIPALCAVAMISS) form a helical membrane-spanning segment. Topologically, residues 77-82 (LSPQEV) are cytoplasmic. The helical transmembrane segment at 83-101 (HGLTFFFQMGWQTLCHLGL) threads the bilayer. The Lumenal portion of the chain corresponds to 102–120 (HYKEYYLCEPPPVRFYITL). The chain crosses the membrane as a helical span at residues 121-136 (SSLMLLTQRVTSLSLD). At 137–206 (ISEGKVEAAW…YPSISFWALT (70 aa)) the chain is on the cytoplasmic side. A helical transmembrane segment spans residues 207-227 (WRGLQILGLECLKVALRRVVS). Over 228 to 240 (AGAGLDDCQRLEC) the chain is Lumenal. The helical transmembrane segment at 241-261 (IYIMWSTAGLFKLTYYSHWIL) threads the bilayer. Residues 262–324 (DDSLLHAAGF…KRLVFQRSRR (63 aa)) are Cytoplasmic-facing. Residues Asn307 and His338 contribute to the active site. Residues 325–338 (WPVLQTFAFSAWWH) form a helical membrane-spanning segment. The Lumenal portion of the chain corresponds to 339–340 (GL). The chain crosses the membrane as a helical span at residues 341 to 357 (HPGQVFGFLCWSVMVKA). Residues 358–376 (DYLIHTFANGCIRSWPLRL) lie on the Cytoplasmic side of the membrane. The helical transmembrane segment at 377–397 (LYRSLTWAHTQIIIAYVMLAV) threads the bilayer. Residues 398 to 407 (EGRSFSSLCR) are Lumenal-facing. A helical transmembrane segment spans residues 408–428 (LCCSYNSIFPVTYCLLLFLLA). Residues 429 to 435 (RRKHKCN) are Cytoplasmic-facing.

The protein belongs to the membrane-bound acyltransferase family. As to quaternary structure, monomer. Not glycosylated.

It localises to the endoplasmic reticulum membrane. The catalysed reaction is octanoyl-CoA + L-seryl-[protein] = O-octanoyl-L-seryl-[protein] + CoA. It catalyses the reaction decanoyl-CoA + L-seryl-[protein] = O-decanoyl-L-seryl-[protein] + CoA. The enzyme catalyses L-seryl-[protein] + acetyl-CoA = O-acetyl-L-seryl-[protein] + CoA. It carries out the reaction L-seryl-[protein] + butanoyl-CoA = O-butanoyl-L-seryl-[protein] + CoA. The catalysed reaction is pentanoyl-CoA + L-seryl-[protein] = O-pentanoyl-L-seryl-[protein] + CoA. It catalyses the reaction hexanoyl-CoA + L-seryl-[protein] = O-hexanoyl-L-seryl-[protein] + CoA. The enzyme catalyses heptanoyl-CoA + L-seryl-[protein] = O-heptanoyl-L-seryl-[protein] + CoA. It carries out the reaction nonanoyl-CoA + L-seryl-[protein] = O-nonanoyl-L-seryl-[protein] + CoA. The catalysed reaction is L-seryl-[protein] + dodecanoyl-CoA = O-dodecanoyl-L-seryl-[protein] + CoA. It catalyses the reaction L-seryl-[protein] + tetradecanoyl-CoA = O-tetradecanoyl-L-seryl-[protein] + CoA. The enzyme catalyses a fatty acyl-CoA + L-seryl-[protein] = O-fatty acyl-L-seryl-[protein] + CoA. Its function is as follows. Catalyzes ghrelin acylation at 'Ser-3' using preferentially octanoyl-CoA, hexanoyl-CoA and decanoyl-CoA as acyl-CoA donors leading to ghrelin activity. In vitro uses also acyl-CoA donors of different lengths from short-chain (C2) to long-chain fatty acids (C16) knowing that acyl-CoA donors from butanoyl-CoA (C4) to dodecanoyl-CoA (C12) are more efficient compared to longer acyl-CoA donors, such as myristoyl-CoA (C14) and palmitoyl-CoA (C16) that are not efficient. In Rattus norvegicus (Rat), this protein is Membrane-bound ghrelin O-acyltransferase MBOAT4.